The chain runs to 701 residues: Elongation factor G (701 aa).

One can recognise a tr-type G domain in the interval 8–290 (SLYRNIGISA…AVVELLPAPT (283 aa)). Residues 17-24 (AHIDAGKT), 88-92 (DTPGH), and 142-145 (NKMD) each bind GTP.

The protein belongs to the TRAFAC class translation factor GTPase superfamily. Classic translation factor GTPase family. EF-G/EF-2 subfamily.

The protein localises to the cytoplasm. Catalyzes the GTP-dependent ribosomal translocation step during translation elongation. During this step, the ribosome changes from the pre-translocational (PRE) to the post-translocational (POST) state as the newly formed A-site-bound peptidyl-tRNA and P-site-bound deacylated tRNA move to the P and E sites, respectively. Catalyzes the coordinated movement of the two tRNA molecules, the mRNA and conformational changes in the ribosome. This is Elongation factor G from Neisseria meningitidis serogroup B (strain ATCC BAA-335 / MC58).